A 318-amino-acid polypeptide reads, in one-letter code: Cell surface sensor SHO1 (318 aa).

The segment at 1-23 is disordered; that stretch reads MPSYGSLHSPSLRKMEHSRGQYG. Residues 1–38 are Cytoplasmic-facing; it reads MPSYGSLHSPSLRKMEHSRGQYGGGRKGMSLGNVIGDP. The helical transmembrane segment at 39–59 threads the bilayer; the sequence is FALATISIAGLAWLIAFIASI. Residues 60-71 are Extracellular-facing; that stretch reads VAQIQTTQGFPT. The helical transmembrane segment at 72–92 threads the bilayer; it reads YTWWTVVFYFFLIPGVFVVVA. At 93-100 the chain is on the cytoplasmic side; the sequence is SDTIQTYH. A helical membrane pass occupies residues 101–121; it reads VALVGYMACGLVLTTSSVNGL. The Extracellular portion of the chain corresponds to 122–130; the sequence is VYSTNGAKE. The chain crosses the membrane as a helical span at residues 131–151; that stretch reads AAAAGFILLSMVTIVWIFYFG. The Cytoplasmic portion of the chain corresponds to 152–318; that stretch reads SAPSAMPRAY…IAPSNYLILL (167 aa). Residues 172 to 255 are disordered; it reads TSNNRQTMTG…AGGAADAEIV (84 aa). Residues 190-214 show a composition bias toward polar residues; that stretch reads ETSTSVQPPQMYTSAQLNGFENPSP. Positions 237 to 250 are enriched in low complexity; the sequence is GLPKTTTPPAGGAA. The SH3 domain maps to 259–318; it reads EYPYRAKAIYTYEANPDDANEISFSKHEILEVSDVSGRWWQARKETGETGIAPSNYLILL.

This sequence belongs to the SHO1 family. Forms homooligomers.

It localises to the cell membrane. In terms of biological role, MSB2 and SHO1 have overlapping functions in recognizing various surface signals for MAPK PMK1 activation and appressorium formation. While MSB2 is critical for sensing surface hydrophobicity and cutin monomers, SHO1 may play a more important role in recognizing rice leaf waxes. The protein is Cell surface sensor SHO1 of Pyricularia oryzae (strain 70-15 / ATCC MYA-4617 / FGSC 8958) (Rice blast fungus).